We begin with the raw amino-acid sequence, 1143 residues long: DNA-directed RNA polymerase subunit beta (1143 aa).

This sequence belongs to the RNA polymerase beta chain family. In terms of assembly, in plastids the minimal PEP RNA polymerase catalytic core is composed of four subunits: alpha, beta, beta', and beta''. When a (nuclear-encoded) sigma factor is associated with the core the holoenzyme is formed, which can initiate transcription.

Its subcellular location is the plastid. The protein localises to the chloroplast. It carries out the reaction RNA(n) + a ribonucleoside 5'-triphosphate = RNA(n+1) + diphosphate. In terms of biological role, DNA-dependent RNA polymerase catalyzes the transcription of DNA into RNA using the four ribonucleoside triphosphates as substrates. The chain is DNA-directed RNA polymerase subunit beta from Pyropia yezoensis (Susabi-nori).